The primary structure comprises 146 residues: Anti-sigma F factor (146 aa).

It belongs to the anti-sigma-factor family.

The catalysed reaction is L-seryl-[protein] + ATP = O-phospho-L-seryl-[protein] + ADP + H(+). It catalyses the reaction L-threonyl-[protein] + ATP = O-phospho-L-threonyl-[protein] + ADP + H(+). Its function is as follows. Binds to sigma F and blocks its ability to form an RNA polymerase holoenzyme (E-sigma F). Phosphorylates SpoIIAA on a serine residue. This phosphorylation may enable SpoIIAA to act as an anti-anti-sigma factor that counteracts SpoIIAB and thus releases sigma F from inhibition. This chain is Anti-sigma F factor, found in Bacillus cytotoxicus (strain DSM 22905 / CIP 110041 / 391-98 / NVH 391-98).